Reading from the N-terminus, the 351-residue chain is MAQVINTNSLSLMAQNNLNKSQSSLGTAIERLSSGLRINSAKDDAAGQAISNRFTANIKGLTQASRNANDGISLAQTTEGALNEVNDNLQNIRRLTVQAQNGSNSTSDLKSIQDEITQRLSEINRISEQTDFNGVKVLSSDQKLTIQVGANDGETTDIDLKKIDAKQLGMDTFDVTTKSAKAGAEIATGTKITVDSDATKQADADVTGLAKGQTLVSGTDADGKSAYFIATKDDATGDVAYTKAKVADDGKVTDSGTDAGVKNPLATLDKALAQVDGLRSSLGAVQNRFDSVINNLNSTVNNLSASQSRIQDADYATEVSNMSRANILQQAGTSVLAQANQSTQNVLSLLR.

Belongs to the bacterial flagellin family.

It localises to the secreted. Its subcellular location is the bacterial flagellum. Functionally, flagellin is the subunit protein which polymerizes to form the filaments of bacterial flagella. The protein is Flagellin (fliC) of Serratia marcescens.